The sequence spans 368 residues: Mitogen-activated protein kinase KSS1 (368 aa).

In terms of domain architecture, Protein kinase spans 13 to 313 (YKLVDLIGEG…AAEALRHPYL (301 aa)). ATP is bound by residues 19–27 (IGEGAYGTV) and lysine 42. Aspartate 143 acts as the Proton acceptor in catalysis. At threonine 183 the chain carries Phosphothreonine. The TXY motif lies at 183–185 (TEY). Residue tyrosine 185 is modified to Phosphotyrosine.

The protein belongs to the protein kinase superfamily. Ser/Thr protein kinase family. MAP kinase subfamily. HOG1 sub-subfamily. As to quaternary structure, in the nucleus, KSS1 forms a complex with DIG1, DIG2 and STE12; in contrast to FUS3 the interaction of KSS1 with STE12 does not depend on DIG1 and DIG2. Phosphorylated KSS1 shows reduced interaction with STE12. During pheromone activation and phosphorylation, KSS1 forms a membrane-associated complex with the scaffold protein STE5, the MAPKK STE7, the MAPKKK STE11, and the G-protein beta subunit GBB/STE4; interacting directly with POF1, STE7 and STE5 proteins. The cofactor is Mg(2+). Dually phosphorylated on Thr-183 and Tyr-185 by STE7 in response to pheromone or carbon/nitrogen limitation, which activates the enzyme. Activated FUS3 down-regulates KSS1 phosphorylation.

It localises to the nucleus. It is found in the cytoplasm. The protein localises to the periplasm. It carries out the reaction L-seryl-[protein] + ATP = O-phospho-L-seryl-[protein] + ADP + H(+). It catalyses the reaction L-threonyl-[protein] + ATP = O-phospho-L-threonyl-[protein] + ADP + H(+). Its activity is regulated as follows. Activated by tyrosine and threonine phosphorylation after pheromone treatment or carbon/nitrogen limitation. Functionally, together with closely related FUS3, KSS1 is the final kinase in the signal transduction cascade regulating activation/repression of the mating and filamentation pathways, induced by pheromone and nitrogen/carbon limitation, respectively. Phosphorylated KSS1 activates both pathways, whereas activated FUS3 activates the mating but suppresses the filamentation pathway. KSS1 activity is down-regulated by FUS3 during pheromone induction to prevent inappropriate activation of the filamentation pathway. During induction of filamentation, KSS1 activates the transcription factor STE12 resulting in its binding to and activation of filamentation specific genes. Non-activated KSS1 has a kinase-independent repressive effect on STE12 transcriptional activity, that is mediated by direct binding to STE12 and depends on the presence of DIG1 and DIG2, and that is required for the suppression of filamentation under normal growth conditions. SSN3/SRB10 contributes further to the suppression of filamentation under these conditions by reducing STE12 stability independent of KSS1. FUS3 can partially compensate for the lack of KSS1 but filamentation becomes constitutively induced at a low level in the absence of any signal. KSS1 phosphorylates STE7, STE5, FAR1, DIG1, DIG2, STE12, and SST2. The polypeptide is Mitogen-activated protein kinase KSS1 (KSS1) (Saccharomyces cerevisiae (strain ATCC 204508 / S288c) (Baker's yeast)).